A 467-amino-acid polypeptide reads, in one-letter code: MSKGTLFDKVWDLHTVGTLPSGLTQLFIGLHLVHEVTSPQAFAMLRERGLKVLFPERTVATVDHIVPTENQARPFVDRLAEEMIQALEQNCQENNITFYNIGSGNQGIVHVIAPELGLTQPGMTIACGDSHTSSHGAFGAIAFGIGTSQVRDVLASQTLSLSKLKVRKIEVNGTLNPGVYAKDVILHIIRTLGVKGGVGYAYEYAGTTFEQMNMEERMTVCNMAIEGGARCGYVNPDQVTYDYLQGRDFAPQGADWEKAVAWWESIKSDADAEYDDVIVFNAADIPPTVTWGITPGQGIGVNQLIPQPEELLEEDRFVAEEAYRYMDLYPGQPIKGTKIDVCFIGSCTNGRLSDLQEAAKIAKGRHVAEGVKAFVVPGSERVKKAAEAEGLDKIFEAAGFEWREPGCSMCLAMNPDKLEGRQISASSSNRNFKGRQGSASGRTLLMSPAMVATAAIQGEVADVRELL.

Residues cysteine 347, cysteine 407, and cysteine 410 each contribute to the [4Fe-4S] cluster site.

The protein belongs to the aconitase/IPM isomerase family. LeuC type 1 subfamily. Heterodimer of LeuC and LeuD. [4Fe-4S] cluster is required as a cofactor.

The enzyme catalyses (2R,3S)-3-isopropylmalate = (2S)-2-isopropylmalate. Its pathway is amino-acid biosynthesis; L-leucine biosynthesis; L-leucine from 3-methyl-2-oxobutanoate: step 2/4. In terms of biological role, catalyzes the isomerization between 2-isopropylmalate and 3-isopropylmalate, via the formation of 2-isopropylmaleate. The sequence is that of 3-isopropylmalate dehydratase large subunit from Trichormus variabilis (strain ATCC 29413 / PCC 7937) (Anabaena variabilis).